We begin with the raw amino-acid sequence, 203 residues long: Flagellar transcriptional regulator FlhC (203 aa).

Residues Cys-161, Cys-164, Cys-181, and Cys-184 each contribute to the Zn(2+) site.

This sequence belongs to the FlhC family. In terms of assembly, heterohexamer composed of two FlhC and four FlhD subunits. Each FlhC binds a FlhD dimer, forming a heterotrimer, and a hexamer assembles by dimerization of two heterotrimers. The cofactor is Zn(2+).

It is found in the cytoplasm. Functions in complex with FlhD as a master transcriptional regulator that regulates transcription of several flagellar and non-flagellar operons by binding to their promoter region. Activates expression of class 2 flagellar genes, including fliA, which is a flagellum-specific sigma factor that turns on the class 3 genes. Also regulates genes whose products function in a variety of physiological pathways. This is Flagellar transcriptional regulator FlhC from Cupriavidus necator (strain ATCC 17699 / DSM 428 / KCTC 22496 / NCIMB 10442 / H16 / Stanier 337) (Ralstonia eutropha).